The primary structure comprises 507 residues: Desmethyl-deoxy-podophyllotoxin synthase (507 aa).

Residues 1-21 (MEFLSFPLSSALLIILLFMLV) form a helical membrane-spanning segment. A heme-binding site is contributed by Cys-440.

This sequence belongs to the cytochrome P450 family. Heme is required as a cofactor. As to expression, rhizome-specific expression.

It is found in the membrane. The enzyme catalyses (-)-deoxypodophyllotoxin + reduced [NADPH--hemoprotein reductase] + O2 = (-)-4'-desmethyl-deoxypodophyllotoxin + formaldehyde + oxidized [NADPH--hemoprotein reductase] + H2O + H(+). The protein operates within aromatic compound metabolism; phenylpropanoid biosynthesis. Functionally, cytochrome P450 involved in the biosynthesis of etoposide, a chemotherapeutic compound of the topoisomerase inhibitor family. Catalyzes the conversion of deoxypodophyllotoxin to desmethyl-deoxypodophyllotoxin. The chain is Desmethyl-deoxy-podophyllotoxin synthase from Sinopodophyllum hexandrum (Himalayan may apple).